Consider the following 82-residue polypeptide: Beta-defensin 113 (82 aa).

The signal sequence occupies residues 1–16 (MKILCIFLTFVFTVSC). Disulfide bonds link Cys-35-Cys-61, Cys-42-Cys-56, and Cys-46-Cys-62.

It belongs to the beta-defensin family.

The protein localises to the secreted. Has antibacterial activity. This chain is Beta-defensin 113 (DEFB113), found in Homo sapiens (Human).